The primary structure comprises 316 residues: Porphobilinogen deaminase (316 aa).

Cys249 bears the S-(dipyrrolylmethanemethyl)cysteine mark.

The protein belongs to the HMBS family. As to quaternary structure, monomer. Requires dipyrromethane as cofactor.

It carries out the reaction 4 porphobilinogen + H2O = hydroxymethylbilane + 4 NH4(+). The protein operates within porphyrin-containing compound metabolism; protoporphyrin-IX biosynthesis; coproporphyrinogen-III from 5-aminolevulinate: step 2/4. In terms of biological role, tetrapolymerization of the monopyrrole PBG into the hydroxymethylbilane pre-uroporphyrinogen in several discrete steps. The sequence is that of Porphobilinogen deaminase from Nitrobacter hamburgensis (strain DSM 10229 / NCIMB 13809 / X14).